The sequence spans 475 residues: Ribulose bisphosphate carboxylase large chain (475 aa).

Residues 1–2 (MS) constitute a propeptide that is removed on maturation. The residue at position 3 (P3) is an N-acetylproline. An N6,N6,N6-trimethyllysine modification is found at K14. Positions 123 and 173 each coordinate substrate. K175 serves as the catalytic Proton acceptor. Position 177 (K177) interacts with substrate. The Mg(2+) site is built by K201, D203, and E204. K201 is subject to N6-carboxylysine. The Proton acceptor role is filled by H294. Substrate-binding residues include R295, H327, and S379.

It belongs to the RuBisCO large chain family. Type I subfamily. In terms of assembly, heterohexadecamer of 8 large chains and 8 small chains; disulfide-linked. The disulfide link is formed within the large subunit homodimers. The cofactor is Mg(2+). In terms of processing, the disulfide bond which can form in the large chain dimeric partners within the hexadecamer appears to be associated with oxidative stress and protein turnover.

The protein localises to the plastid. The protein resides in the chloroplast. It carries out the reaction 2 (2R)-3-phosphoglycerate + 2 H(+) = D-ribulose 1,5-bisphosphate + CO2 + H2O. The catalysed reaction is D-ribulose 1,5-bisphosphate + O2 = 2-phosphoglycolate + (2R)-3-phosphoglycerate + 2 H(+). In terms of biological role, ruBisCO catalyzes two reactions: the carboxylation of D-ribulose 1,5-bisphosphate, the primary event in carbon dioxide fixation, as well as the oxidative fragmentation of the pentose substrate in the photorespiration process. Both reactions occur simultaneously and in competition at the same active site. This is Ribulose bisphosphate carboxylase large chain from Afrocarpus gracilior (African fern pine).